Here is a 465-residue protein sequence, read N- to C-terminus: GTPase Der (465 aa).

2 consecutive EngA-type G domains span residues 3–166 (FLVA…LNEY) and 184–358 (IHFS…ACAS). GTP contacts are provided by residues 9–16 (GRANVGKS), 56–60 (DTGGI), 118–121 (NKVD), 190–197 (GRPNVGKS), 237–241 (DTAGV), and 302–305 (NKWD). One can recognise a KH-like domain in the interval 359-443 (KKITTADATR…PIVFEFKQSE (85 aa)). Positions 446–465 (FADRKNKRSKDEGSKSKKVK) are disordered.

Belongs to the TRAFAC class TrmE-Era-EngA-EngB-Septin-like GTPase superfamily. EngA (Der) GTPase family. Associates with the 50S ribosomal subunit.

Its function is as follows. GTPase that plays an essential role in the late steps of ribosome biogenesis. This is GTPase Der from Francisella tularensis subsp. tularensis (strain FSC 198).